Consider the following 673-residue polypeptide: Gametogenetin (673 aa).

Residues M1 to G599 form a disordered region. Positions S14–P30 are enriched in basic and acidic residues. Over residues A70–S83 the composition is skewed to low complexity. The interaction with GGNBP1 stretch occupies residues R125–P506. Residues P161 to P178 show a composition bias toward pro residues. The segment covering L192–S202 has biased composition (polar residues). Positions S257–P268 are enriched in low complexity. Position 399 is a phosphoserine (S399). Over residues P413–P424 the composition is skewed to low complexity. The span at R438–P475 shows a compositional bias: pro residues. Low complexity predominate over residues L504–A531. The tract at residues D511 to T673 is interactions with ZNF403/GGNBP2 and OAZ3. Residues T542–R551 show a composition bias toward basic residues.

In terms of assembly, isoform 1 and isoform 3 interact with FANCL. Isoform 1 interacts with GGNBP1, ZNF403/GGNBP2 and OAZ3. Isoform 2 interacts with GGNBP1. As to expression, testis-specific. Specifically expressed in the germ cells and not in the somatic, Sertoli, or Leydig cells. In adult testis, expression starts in stage VIII pachytene spermatocytes, increases in stage IX and X pachytene spermatocytes, and culminates in stage XI diplotene spermatocytes and the meiotic cells in stage XII. Expression decreases slightly in step 1-3 spermatids, further decreases in step 4-11 spermatids, and is no longer detectable in step 12 spermatids and beyond. Isoform 2 is mainly expressed in testis.

It localises to the cytoplasm. The protein localises to the perinuclear region. Its subcellular location is the cytoplasmic vesicle. It is found in the nucleus. The protein resides in the nucleolus. Its function is as follows. May be involved in spermatogenesis. This chain is Gametogenetin (Ggn), found in Mus musculus (Mouse).